The chain runs to 515 residues: MLLIEEKYRSVAQVLLSSGTCSRCVLRFCCVGSPANYRLPCKEVTYELQKYLSHGDPAEENDTPPSKKAKIEEDTSSNEHLGNCEDVNGSQVVRICPLCLGILQQFCEPEFIEKVFVKINSAVYELKDFVLSISLPAQLSVREHSAWLQAKQEMGKHGHSLDKTDIVQLKEAYKWIIHPLLSDQLGIQADSKSLFEVAVVFTHPETDGDCHFLATVCRDCFKPTKNKQSVFTRMAVVKALEKIKEEDFRVQFPFPPSSPETTCEVVDIQCNHSPVFVAGRYNKYSRNLPQTPWIIDGERKIESSVEELITDHLVAAFRSSSFNFSSSGREDVDVRTLGKGRPFAIELLNPHKVQFTGQEIKALQQKINTSDKIKVRDLQIVSREAVAHMKEGEEEKTKCYCALIWIEKMVRNEDLQLLDGLEELTIAQKTPLRVLHRRPLASRSRTIHTMRTEYVDEHHFRLYLKTQAGTYIKEFVHGDFGRTKPNVGSIMETNADILELDVESVDVDWPPSLDD.

Residues C21 and C24 each coordinate Zn(2+). A coiled-coil region spans residues 42-85 (KEVTYELQKYLSHGDPAEENDTPPSKKAKIEEDTSSNEHLGNCE). The interval 55–82 (GDPAEENDTPPSKKAKIEEDTSSNEHLG) is disordered. Residues C96 and C99 each contribute to the Zn(2+) site. The tract at residues 291–304 (TPWIIDGERKIESS) is RNA binding forefinger loop. Catalysis depends on D331, which acts as the Nucleophile. An RNA binding thumb loop region spans residues 428–443 (QKTPLRVLHRRPLASR).

The protein belongs to the pseudouridine synthase Pus10 family.

It localises to the nucleus. The protein resides in the cytoplasm. It is found in the mitochondrion. It catalyses the reaction uridine(55) in tRNA = pseudouridine(55) in tRNA. The catalysed reaction is uridine(54) in tRNA = pseudouridine(54) in tRNA. In terms of biological role, protein with different functions depending on its subcellular location: involved in miRNA processing in the nucleus and acts as a tRNA pseudouridylate synthase in the cytoplasm. In the cytoplasm, acts as a pseudouridylate synthase by catalyzing synthesis of pseudouridine(54) and pseudouridine(55) from uracil-54 and uracil-55, respectively, in the psi GC loop of a subset of tRNAs. tRNA pseudouridylate synthase activity is enhanced by the presence of 1-methyladenosine at position 53-61 of tRNAs. Does not show tRNA pseudouridylate synthase activity in the nucleus. In the nucleus, promotes primary microRNAs (pri-miRNAs) processing independently of its RNA pseudouridylate synthase activity. Binds pri-miRNAs. The polypeptide is tRNA pseudouridine synthase Pus10 (Xenopus laevis (African clawed frog)).